Reading from the N-terminus, the 108-residue chain is MMKGQLAGLMRQAQQMQENMKKAQDALAEIQVEGAAGGGLVKVTMTCRHDVKRVAIDPSLLGEDKDMLEDLVAAAFNDALRKAEATSQEKMASVTAGMPLPPGMKLPF.

Positions 86-108 (TSQEKMASVTAGMPLPPGMKLPF) are disordered. A compositionally biased stretch (pro residues) spans 99 to 108 (PLPPGMKLPF).

This sequence belongs to the YbaB/EbfC family. As to quaternary structure, homodimer.

Its subcellular location is the cytoplasm. The protein localises to the nucleoid. Its function is as follows. Binds to DNA and alters its conformation. May be involved in regulation of gene expression, nucleoid organization and DNA protection. The polypeptide is Nucleoid-associated protein BPP1222 (Bordetella parapertussis (strain 12822 / ATCC BAA-587 / NCTC 13253)).